A 681-amino-acid chain; its full sequence is Transketolase 2 (681 aa).

Histidine 30 provides a ligand contact to substrate. Thiamine diphosphate is bound by residues histidine 69 and 116–118 (GPL). A Mg(2+)-binding site is contributed by aspartate 157. Residues glycine 158 and asparagine 187 each coordinate thiamine diphosphate. Residues asparagine 187 and isoleucine 189 each contribute to the Mg(2+) site. Residues histidine 263, arginine 359, and serine 386 each coordinate substrate. Residue histidine 263 coordinates thiamine diphosphate. Positions 418 and 445 each coordinate thiamine diphosphate. The Proton donor role is filled by glutamate 418. Positions 469, 477, and 528 each coordinate substrate.

The protein belongs to the transketolase family. Homodimer. The cofactor is Mg(2+). Ca(2+) serves as cofactor. It depends on Mn(2+) as a cofactor. Co(2+) is required as a cofactor. Requires thiamine diphosphate as cofactor.

The catalysed reaction is D-sedoheptulose 7-phosphate + D-glyceraldehyde 3-phosphate = aldehydo-D-ribose 5-phosphate + D-xylulose 5-phosphate. Its function is as follows. Catalyzes the transfer of a two-carbon ketol group from a ketose donor to an aldose acceptor, via a covalent intermediate with the cofactor thiamine pyrophosphate. This Saccharomyces cerevisiae (strain ATCC 204508 / S288c) (Baker's yeast) protein is Transketolase 2 (TKL2).